We begin with the raw amino-acid sequence, 405 residues long: Arginine biosynthesis bifunctional protein ArgJ (405 aa).

6 residues coordinate substrate: Thr-152, Lys-178, Thr-189, Glu-276, Asn-400, and Thr-405. Thr-189 acts as the Nucleophile in catalysis.

Belongs to the ArgJ family. Heterotetramer of two alpha and two beta chains.

The protein resides in the cytoplasm. It catalyses the reaction N(2)-acetyl-L-ornithine + L-glutamate = N-acetyl-L-glutamate + L-ornithine. The catalysed reaction is L-glutamate + acetyl-CoA = N-acetyl-L-glutamate + CoA + H(+). Its pathway is amino-acid biosynthesis; L-arginine biosynthesis; L-ornithine and N-acetyl-L-glutamate from L-glutamate and N(2)-acetyl-L-ornithine (cyclic): step 1/1. It participates in amino-acid biosynthesis; L-arginine biosynthesis; N(2)-acetyl-L-ornithine from L-glutamate: step 1/4. Functionally, catalyzes two activities which are involved in the cyclic version of arginine biosynthesis: the synthesis of N-acetylglutamate from glutamate and acetyl-CoA as the acetyl donor, and of ornithine by transacetylation between N(2)-acetylornithine and glutamate. The chain is Arginine biosynthesis bifunctional protein ArgJ from Pseudomonas syringae pv. tomato (strain ATCC BAA-871 / DC3000).